A 256-amino-acid polypeptide reads, in one-letter code: Phosphatidylglycerol--prolipoprotein diacylglyceryl transferase 2 (256 aa).

Helical transmembrane passes span Leu11 to Phe31, Phe46 to Ile66, and Phe83 to Cys103. Arg130 provides a ligand contact to a 1,2-diacyl-sn-glycero-3-phospho-(1'-sn-glycerol). 3 helical membrane-spanning segments follow: residues Ala142–Val162, Leu164–Trp184, and Val221–Leu241.

The protein belongs to the Lgt family.

The protein localises to the cell membrane. It catalyses the reaction L-cysteinyl-[prolipoprotein] + a 1,2-diacyl-sn-glycero-3-phospho-(1'-sn-glycerol) = an S-1,2-diacyl-sn-glyceryl-L-cysteinyl-[prolipoprotein] + sn-glycerol 1-phosphate + H(+). It participates in protein modification; lipoprotein biosynthesis (diacylglyceryl transfer). Functionally, catalyzes the transfer of the diacylglyceryl group from phosphatidylglycerol to the sulfhydryl group of the N-terminal cysteine of a prolipoprotein, the first step in the formation of mature lipoproteins. This is Phosphatidylglycerol--prolipoprotein diacylglyceryl transferase 2 from Clostridium perfringens (strain 13 / Type A).